Consider the following 355-residue polypeptide: DNA-directed RNA polymerase subunit alpha (355 aa).

The tract at residues 1–233 is alpha N-terminal domain (alpha-NTD); that stretch reads MVREKVRVST…DLFIPFLHKE (233 aa). The alpha C-terminal domain (alpha-CTD) stretch occupies residues 268-355; it reads KKKIALKSIF…EIYCYSIFFH (88 aa).

The protein belongs to the RNA polymerase alpha chain family. In plastids the minimal PEP RNA polymerase catalytic core is composed of four subunits: alpha, beta, beta', and beta''. When a (nuclear-encoded) sigma factor is associated with the core the holoenzyme is formed, which can initiate transcription.

It localises to the plastid. The protein resides in the chloroplast. The enzyme catalyses RNA(n) + a ribonucleoside 5'-triphosphate = RNA(n+1) + diphosphate. DNA-dependent RNA polymerase catalyzes the transcription of DNA into RNA using the four ribonucleoside triphosphates as substrates. The sequence is that of DNA-directed RNA polymerase subunit alpha from Jasminum nudiflorum (Winter jasmine).